Consider the following 284-residue polypeptide: Four and a half LIM domains protein 5 (284 aa).

The segment at 8-32 adopts a C4-type zinc-finger fold; sequence CQYCTSSLIGKKYVLKDDNLYCISC. LIM zinc-binding domains lie at 39 to 100, 101 to 160, and 161 to 220; these read NYCE…ECSS, KCFH…KEFA, and HYCN…LYAK.

Interacts with CREM (via the third LIM domain). Interacts (via second LIM domain) with SPAG8. Testis-specific, temporal expression is coordinated with CREM.

The protein localises to the nucleus. May be involved in the regulation of spermatogenesis. Stimulates CREM transcriptional activity in a phosphorylation-independent manner. The protein is Four and a half LIM domains protein 5 (Fhl5) of Mus musculus (Mouse).